A 476-amino-acid chain; its full sequence is NADH-quinone oxidoreductase subunit N (476 aa).

14 helical membrane-spanning segments follow: residues leucine 5–glycine 25, leucine 38–glutamate 58, alanine 70–alanine 90, glycine 97–alanine 117, leucine 122–phenylalanine 142, phenylalanine 157–phenylalanine 177, isoleucine 196–phenylalanine 218, threonine 231–valine 253, tryptophan 264–isoleucine 284, leucine 292–threonine 312, glycine 318–leucine 338, leucine 364–phenylalanine 384, proline 401–isoleucine 421, and isoleucine 445–alanine 465.

It belongs to the complex I subunit 2 family. NDH-1 is composed of 14 different subunits. Subunits NuoA, H, J, K, L, M, N constitute the membrane sector of the complex.

The protein resides in the cell inner membrane. The enzyme catalyses a quinone + NADH + 5 H(+)(in) = a quinol + NAD(+) + 4 H(+)(out). NDH-1 shuttles electrons from NADH, via FMN and iron-sulfur (Fe-S) centers, to quinones in the respiratory chain. The immediate electron acceptor for the enzyme in this species is believed to be ubiquinone. Couples the redox reaction to proton translocation (for every two electrons transferred, four hydrogen ions are translocated across the cytoplasmic membrane), and thus conserves the redox energy in a proton gradient. The polypeptide is NADH-quinone oxidoreductase subunit N (Sphingopyxis alaskensis (strain DSM 13593 / LMG 18877 / RB2256) (Sphingomonas alaskensis)).